Reading from the N-terminus, the 79-residue chain is Tau-theraphotoxin-Hs1a (79 aa).

Intrachain disulfides connect Cys2-Cys16, Cys9-Cys23, Cys15-Cys31, Cys44-Cys58, Cys51-Cys63, and Cys57-Cys71. Domain repeat units lie at residues 2 to 31 (CAKE…IPHC) and 42 to 71 (TNCA…IPYC). The tract at residues 2–71 (CAKEGEVCSW…DCPLAFIPYC (70 aa)) is 2 X approximate repeats with cysteine pattern C-C-CC-C-C.

This sequence belongs to the neurotoxin 23 family. Double-knot toxin subfamily. As to quaternary structure, interacts with TRPV1 (2 toxins (4 moieties) bind 1 channel (homotetramer)). Expressed by the venom gland.

It localises to the secreted. In terms of biological role, selectively activates the heat-activated TRPV1 channel. It binds to TRPV1 in an open state-dependent manner, trapping it there to produce irreversible currents. It binds to the outer edge of the external pore of TRPV1 in a counterclockwise configuration, using a limited protein-protein interface and inserting hydrophobic residues into the bilayer. It also partitions naturally into membranes, with the two lobes exhibiting opposing energetics for membrane partitioning (K1) and channel activation (K2). In addition, the toxin disrupts a cluster of hydrophobic residues behind the selectivity filter that are critical for channel activation. The polypeptide is Tau-theraphotoxin-Hs1a (Cyriopagopus schmidti (Chinese bird spider)).